Reading from the N-terminus, the 318-residue chain is Ribosomal protein L11 methyltransferase (318 aa).

T159, G180, D202, and N253 together coordinate S-adenosyl-L-methionine.

It belongs to the methyltransferase superfamily. PrmA family.

It localises to the cytoplasm. The enzyme catalyses L-lysyl-[protein] + 3 S-adenosyl-L-methionine = N(6),N(6),N(6)-trimethyl-L-lysyl-[protein] + 3 S-adenosyl-L-homocysteine + 3 H(+). In terms of biological role, methylates ribosomal protein L11. In Lachnospira eligens (strain ATCC 27750 / DSM 3376 / VPI C15-48 / C15-B4) (Eubacterium eligens), this protein is Ribosomal protein L11 methyltransferase.